Consider the following 323-residue polypeptide: Cyclin-dependent kinase 1 (323 aa).

Residues 4 to 306 form the Protein kinase domain; it reads YQKIEKIGEG…AKQACMHPYF (303 aa). Residues 10–18 and Lys-34 contribute to the ATP site; that span reads IGEGTYGVV. Phosphothreonine is present on Thr-14. The residue at position 15 (Tyr-15) is a Phosphotyrosine. The active-site Proton acceptor is Asp-147. Phosphothreonine; by CAK is present on Thr-180.

Belongs to the protein kinase superfamily. CMGC Ser/Thr protein kinase family. CDC2/CDKX subfamily. Forms a stable but non-covalent complex with a regulatory subunit (SUC1) and with a cyclin.

It catalyses the reaction L-seryl-[protein] + ATP = O-phospho-L-seryl-[protein] + ADP + H(+). It carries out the reaction L-threonyl-[protein] + ATP = O-phospho-L-threonyl-[protein] + ADP + H(+). Its activity is regulated as follows. Phosphorylation at Thr-14 or Tyr-15 inactivates the enzyme, while phosphorylation at Thr-180 activates it. In terms of biological role, cyclin-dependent kinase that acts as a master regulator of the mitotic and meiotic cell cycles. This is Cyclin-dependent kinase 1 from Emericella nidulans (strain FGSC A4 / ATCC 38163 / CBS 112.46 / NRRL 194 / M139) (Aspergillus nidulans).